The primary structure comprises 319 residues: Biotin synthase (319 aa).

The region spanning 44–273 is the Radical SAM core domain; the sequence is IHGDGIDLCS…EAKIRLAGGR (230 aa). [4Fe-4S] cluster is bound by residues cysteine 62, cysteine 66, and cysteine 69. Positions 106, 138, 198, and 268 each coordinate [2Fe-2S] cluster.

It belongs to the radical SAM superfamily. Biotin synthase family. In terms of assembly, homodimer. [4Fe-4S] cluster serves as cofactor. [2Fe-2S] cluster is required as a cofactor.

It catalyses the reaction (4R,5S)-dethiobiotin + (sulfur carrier)-SH + 2 reduced [2Fe-2S]-[ferredoxin] + 2 S-adenosyl-L-methionine = (sulfur carrier)-H + biotin + 2 5'-deoxyadenosine + 2 L-methionine + 2 oxidized [2Fe-2S]-[ferredoxin]. It functions in the pathway cofactor biosynthesis; biotin biosynthesis; biotin from 7,8-diaminononanoate: step 2/2. Functionally, catalyzes the conversion of dethiobiotin (DTB) to biotin by the insertion of a sulfur atom into dethiobiotin via a radical-based mechanism. The protein is Biotin synthase of Clostridium perfringens (strain 13 / Type A).